We begin with the raw amino-acid sequence, 324 residues long: mRNA decay activator protein ZFP36 (324 aa).

The interval M1 to P15 is necessary for nuclear export. Residues M1–T98 are necessary and sufficient for the association with mRNA decay enzymes and mRNA decay activation. Necessary for localization of ARE-containing mRNAs to processing bodies (PBs) regions lie at residues M1–A172 and T98–E324. Residues P15 to P46 show a composition bias toward low complexity. The tract at residues P15–A50 is disordered. S58 carries the phosphoserine; by MAPKAPK2 modification. S64 carries the post-translational modification Phosphoserine. The stretch at P69–G73 is one P-P-P-P-G repeat. A disordered region spans residues P76–S100. S86 and S88 each carry phosphoserine. T90 is modified (phosphothreonine). At S91 the chain carries Phosphoserine. Positions T93–P166 are necessary for nuclear localization. Positions T95 to A171 are necessary for RNA-binding. 2 C3H1-type zinc fingers span residues R101 to G129 and K139 to S167. A necessary for interaction with PABPN1 region spans residues R101–R192. Residue S167 is modified to Phosphoserine. Positions A172–E324 are necessary for mRNA decay activation. S184 bears the Phosphoserine; by MAPKAPK2 mark. Disordered stretches follow at residues F185 to S227 and P270 to E324. Phosphoserine is present on S195. Residues P196 to S200 form a P-P-P-P-G repeat. A compositionally biased stretch (low complexity) spans P204–S214. Residue S216 is modified to Phosphoserine. One copy of the P-P-P-P-G repeat lies at P218 to G222. S227 is subject to Phosphoserine; by MAPK1; in vitro. A phosphoserine mark is found at S274, S294, and S321. The tract at residues A310 to E324 is interaction with CNOT1.

Associates with cytoplasmic CCR4-NOT and PAN2-PAN3 deadenylase complexes to trigger ARE-containing mRNA deadenylation and decay processes. Part of a mRNA decay activation complex at least composed of poly(A)-specific exoribonucleases CNOT6, EXOSC2 and XRN1 and mRNA-decapping enzymes DCP1A and DCP2. Associates with the RNA exosome complex. Interacts (via phosphorylated form) with 14-3-3 proteins; these interactions promote exclusion of ZFP36 from cytoplasmic stress granules in response to arsenite treatment in a MAPKAPK2-dependent manner and does not prevent CCR4-NOT deadenylase complex recruitment or ZFP36-induced ARE-containing mRNA deadenylation and decay processes. Interacts with 14-3-3 proteins; these interactions occur in response to rapamycin in an Akt-dependent manner. Interacts with AGO2 and AGO4. Interacts (via C-terminus) with CNOT1; this interaction occurs in a RNA-independent manner and induces mRNA deadenylation. Interacts (via N-terminus) with CNOT6. Interacts with CNOT6L. Interacts (via C-terminus) with CNOT7; this interaction occurs in a RNA-independent manner, induces mRNA deadenylation and is inhibited in a phosphorylation MAPKAPK2-dependent manner. Interacts (via unphosphorylated form) with CNOT8; this interaction occurs in a RNA-independent manner and is inhibited in a phosphorylation MAPKAPK2-dependent manner. Interacts with DCP1A. Interacts (via N-terminus) with DCP2. Interacts with EDC3. Interacts (via N-terminus) with EXOSC2. Interacts with heat shock 70 kDa proteins. Interacts with KHSRP; this interaction increases upon cytokine-induced treatment. Interacts with MAP3K4; this interaction enhances the association with SH3KBP1/CIN85. Interacts with MAPKAPK2; this interaction occurs upon skeletal muscle satellite cell activation. Interacts with NCL. Interacts with NUP214; this interaction increases upon lipopolysaccharide (LPS) stimulation. Interacts with PABPC1; this interaction occurs in a RNA-dependent manner. Interacts (via hypophosphorylated form) with PABPN1 (via RRM domain and C-terminal arginine-rich region); this interaction occurs in the nucleus in a RNA-independent manner, decreases in presence of single-stranded poly(A) RNA-oligomer and in a p38 MAPK-dependent-manner and inhibits nuclear poly(A) tail synthesis. Interacts with PAN2. Interacts (via C3H1-type zinc finger domains) with PKM. Interacts (via C3H1-type zinc finger domains) with nuclear RNA poly(A) polymerase. Interacts with PPP2CA; this interaction occurs in LPS-stimulated cells and induces ZFP36 dephosphorylation, and hence may promote ARE-containing mRNAs decay. Interacts (via C-terminus) with PRR5L (via C-terminus); this interaction may accelerate ZFP36-mediated mRNA decay during stress. Interacts (via C-terminus) with SFN; this interaction occurs in a phosphorylation-dependent manner. Interacts (via extreme C-terminal region) with SH3KBP1/CIN85 (via SH3 domains); this interaction enhances MAP3K4-induced phosphorylation of ZFP36 at Ser-64 and Ser-91 and does not alter neither ZFP36 binding to ARE-containing transcripts nor TNF-alpha mRNA decay. Interacts with XRN1. Interacts (via C-terminus and Ser-184 phosphorylated form) with YWHAB; this interaction occurs in a p38/MAPKAPK2-dependent manner, increases cytoplasmic localization of ZFP36 and protects ZFP36 from Ser-184 dephosphorylation by serine/threonine phosphatase 2A, and hence may be crucial for stabilizing ARE-containing mRNAs. Interacts (via phosphorylated form) with YWHAE. Interacts (via C-terminus) with YWHAG; this interaction occurs in a phosphorylation-dependent manner. Interacts with YWHAH; this interaction occurs in a phosphorylation-dependent manner. Interacts with YWHAQ; this interaction occurs in a phosphorylation-dependent manner. Interacts with (via C-terminus) YWHAZ; this interaction occurs in a phosphorylation-dependent manner. Does not interact with SH3KBP1. Interacts (via P-P-P-P-G repeats) with GIGYF2; the interaction is direct. Phosphorylated. Phosphorylation at serine and/or threonine residues occurs in a p38 MAPK- and MAPKAPK2-dependent manner. Phosphorylated by MAPKAPK2 at Ser-58 and Ser-184; phosphorylation increases its stability and cytoplasmic localization, promotes binding to 14-3-3 adapter proteins and inhibits the recruitment of cytoplasmic CCR4-NOT and PAN2-PAN3 deadenylase complexes to the mRNA decay machinery, thereby inhibiting ZFP36-induced ARE-containing mRNA deadenylation and decay processes. Phosphorylation by MAPKAPK2 does not impair ARE-containing RNA-binding. Phosphorylated in a MAPKAPK2- and p38 MAPK-dependent manner upon skeletal muscle satellite cell activation; this phosphorylation inhibits ZFP36-mediated mRNA decay activity, and hence stabilizes MYOD1 mRNA. Phosphorylated by MAPK1 upon mitogen stimulation. Phosphorylated at Ser-64 and Ser-91; these phosphorylations increase in a SH3KBP1-dependent manner. Phosphorylated at serine and threonine residues in a pyruvate kinase PKM- and p38 MAPK-dependent manner. Phosphorylation at Ser-58 may participate in the PKM-mediated degradation of ZFP36 in a p38 MAPK-dependent manner. Dephosphorylated by serine/threonine phosphatase 2A at Ser-184. Post-translationally, ubiquitinated; pyruvate kinase (PKM)-dependent ubiquitination leads to proteasomal degradation through a p38 MAPK signaling pathway.

It localises to the nucleus. The protein localises to the cytoplasm. It is found in the cytoplasmic granule. The protein resides in the P-body. Its function is as follows. Zinc-finger RNA-binding protein that destabilizes numerous cytoplasmic AU-rich element (ARE)-containing mRNA transcripts by promoting their poly(A) tail removal or deadenylation, and hence provide a mechanism for attenuating protein synthesis. Acts as an 3'-untranslated region (UTR) ARE mRNA-binding adapter protein to communicate signaling events to the mRNA decay machinery. Recruits deadenylase CNOT7 (and probably the CCR4-NOT complex) via association with CNOT1, and hence promotes ARE-mediated mRNA deadenylation. Also functions by recruiting components of the cytoplasmic RNA decay machinery to the bound ARE-containing mRNAs. Self regulates by destabilizing its own mRNA. Binds to 3'-UTR ARE of numerous mRNAs. Also binds to ARE of its own mRNA. Plays a role in anti-inflammatory responses; suppresses tumor necrosis factor (TNF)-alpha production by stimulating ARE-mediated TNF-alpha mRNA decay and several other inflammatory ARE-containing mRNAs in interferon (IFN)- and/or lipopolysaccharide (LPS)-induced macrophages. Also plays a role in the regulation of dendritic cell maturation at the post-transcriptional level, and hence operates as part of a negative feedback loop to limit the inflammatory response. Promotes ARE-mediated mRNA decay of hypoxia-inducible factor HIF1A mRNA during the response of endothelial cells to hypoxia. Positively regulates early adipogenesis of preadipocytes by promoting ARE-mediated mRNA decay of immediate early genes (IEGs). Negatively regulates hematopoietic/erythroid cell differentiation by promoting ARE-mediated mRNA decay of the transcription factor STAT5B mRNA. Plays a role in maintaining skeletal muscle satellite cell quiescence by promoting ARE-mediated mRNA decay of the myogenic determination factor MYOD1 mRNA. Also associates with and regulates the expression of non-ARE-containing target mRNAs at the post-transcriptional level, such as MHC class I mRNAs. Participates in association with argonaute RISC catalytic components in the ARE-mediated mRNA decay mechanism; assists microRNA (miRNA) targeting ARE-containing mRNAs. May also play a role in the regulation of cytoplasmic mRNA decapping; enhances decapping of ARE-containing RNAs, in vitro. Involved in the delivery of target ARE-mRNAs to processing bodies (PBs). In addition to its cytosolic mRNA-decay function, affects nuclear pre-mRNA processing. Negatively regulates nuclear poly(A)-binding protein PABPN1-stimulated polyadenylation activity on ARE-containing pre-mRNA during LPS-stimulated macrophages. Also involved in the regulation of stress granule (SG) and P-body (PB) formation and fusion. Plays a role in the regulation of keratinocyte proliferation, differentiation and apoptosis. Plays a role as a tumor suppressor by inhibiting cell proliferation in breast cancer cells. The polypeptide is mRNA decay activator protein ZFP36 (Bos taurus (Bovine)).